We begin with the raw amino-acid sequence, 145 residues long: Large ribosomal subunit protein uL13 (145 aa).

This sequence belongs to the universal ribosomal protein uL13 family. In terms of assembly, part of the 50S ribosomal subunit.

Its function is as follows. This protein is one of the early assembly proteins of the 50S ribosomal subunit, although it is not seen to bind rRNA by itself. It is important during the early stages of 50S assembly. The protein is Large ribosomal subunit protein uL13 of Listeria innocua serovar 6a (strain ATCC BAA-680 / CLIP 11262).